The chain runs to 485 residues: ATP-dependent 6-phosphofructokinase 7 (485 aa).

Residues G101, 164 to 165 (RG), and 189 to 192 (GDGT) contribute to the ATP site. D190 is a Mg(2+) binding site. Substrate is bound by residues 218-220 (TID), 263-265 (MGR), E319, and 374-377 (YMIR). Residue D220 is the Proton acceptor of the active site. A disordered region spans residues 449–485 (SFLGPKDTSEEKKELPETPLLDDGAVDIPPVTKEVTK). Residues 455–464 (DTSEEKKELP) show a composition bias toward basic and acidic residues.

The protein belongs to the phosphofructokinase type A (PFKA) family. PPi-dependent PFK group II subfamily. Atypical ATP-dependent clade 'X' sub-subfamily. Homotetramer. Mg(2+) is required as a cofactor. As to expression, expressed in roots, leaves, stems and flowers.

Its subcellular location is the cytoplasm. It catalyses the reaction beta-D-fructose 6-phosphate + ATP = beta-D-fructose 1,6-bisphosphate + ADP + H(+). It participates in carbohydrate degradation; glycolysis; D-glyceraldehyde 3-phosphate and glycerone phosphate from D-glucose: step 3/4. Allosterically activated by AMP. Functionally, catalyzes the phosphorylation of D-fructose 6-phosphate to fructose 1,6-bisphosphate by ATP, the first committing step of glycolysis. This chain is ATP-dependent 6-phosphofructokinase 7, found in Arabidopsis thaliana (Mouse-ear cress).